The chain runs to 318 residues: Adenylate isopentenyltransferase 4 (318 aa).

Glycine 12–serine 19 serves as a coordination point for ATP.

It belongs to the IPP transferase family. Mg(2+) serves as cofactor. In terms of tissue distribution, expressed in immature seeds with highest expression in the chalazal endosperm.

The protein localises to the cytoplasm. The catalysed reaction is dimethylallyl diphosphate + ADP = N(6)-(dimethylallyl)adenosine 5'-diphosphate + diphosphate. The enzyme catalyses dimethylallyl diphosphate + ATP = N(6)-(dimethylallyl)adenosine 5'-triphosphate + diphosphate. Involved in cytokinin biosynthesis. Catalyzes the transfer of an isopentenyl group from dimethylallyl diphosphate (DMAPP) to ATP and ADP, but not to AMP. Has no DMAPP:tRNA isopentenyltransferase activity. The sequence is that of Adenylate isopentenyltransferase 4 (IPT4) from Arabidopsis thaliana (Mouse-ear cress).